The following is a 1066-amino-acid chain: Allene oxide synthase-lipoxygenase protein (1066 aa).

The tract at residues 1 to 371 is allene oxide synthase; that stretch reads MTWKNFGFEI…LKIGSLVPAG (371 aa). Tyrosine 353 lines the heme pocket. The interval 372-1066 is arachidonate 8-lipoxygenase; it reads QNAIYNVEVE…PERIPNGTAI (695 aa). Positions 374–490 constitute a PLAT domain; sequence AIYNVEVETG…KDMVLFPGEA (117 aa). Residues histidine 387, glycine 389, threonine 390, aspartate 391, asparagine 416, aspartate 417, glutamate 419, aspartate 452, and aspartate 454 each contribute to the Ca(2+) site. Residues 491-1066 form the Lipoxygenase domain; sequence TLPFNEVPAI…PERIPNGTAI (576 aa). Residues histidine 757, histidine 762, histidine 943, asparagine 947, and isoleucine 1066 each contribute to the Fe cation site.

The protein in the C-terminal section; belongs to the lipoxygenase family. As to quaternary structure, dimer. It depends on Ca(2+) as a cofactor. Fe cation is required as a cofactor. Requires heme as cofactor.

It is found in the cytoplasm. The protein localises to the membrane. The catalysed reaction is (5Z,8Z,11Z,14Z)-eicosatetraenoate + O2 = (8R)-hydroperoxy-(5Z,9E,11Z,14Z)-eicosatetraenoate. It catalyses the reaction (8R)-hydroperoxy-(5Z,9E,11Z,14Z)-eicosatetraenoate = 8,9-epoxy-(5Z,9E,11Z,14Z)-eicosatetraenoate + H2O. The enzyme catalyses (5Z,8Z,11Z,14Z,17Z)-eicosapentaenoate + O2 = (8R)-hydroperoxy-(5Z,9E,11Z,14Z,17Z)-eicosapentaenoate. It carries out the reaction (4Z,7Z,10Z,13Z,16Z,19Z)-docosahexaenoate + O2 = 10-hydroperoxy-(4Z,7Z,11E,13Z,16Z,19Z)-docosahexaenoate. The catalysed reaction is (8Z,11Z,14Z)-eicosatrienoate + O2 = (8R)-hydroperoxy-(9E,11Z,14Z)-eicosatrienoate. It catalyses the reaction (8Z,11Z,14Z)-eicosatrienoate + O2 = 10-hydroperoxy-(8Z,11Z,14Z)-eicosatrienoate. The enzyme catalyses (8Z,11Z,14Z)-eicosatrienoate + O2 = 11-hydroperoxy-(8Z,12E,14Z)-eicosatrienoate. The protein operates within lipid metabolism; arachidonate metabolism. It participates in lipid metabolism; fatty acid metabolism. Lipoxygenase activity is stimulated by calcium, sodium, lithium and potassium ions. Calcium binding promotes interaction with membranes and thus facilitates access to substrates. In terms of biological role, bifunctional enzyme which is responsible for allene oxide biosynthesis via a two-step reaction; first the lipoxygenase reaction that converts polyunsaturated fatty acids such as arachidonate ((5Z,8Z,11Z,14Z)-eicosatetraenoate) into a (8R)-hydroperoxide intermediate ((8R)-hydroperoxy-(5Z,9E,11Z,14Z)-eicosatetraenoate) followed by the allene oxide synthase reaction that converts the hydroperoxide intermediate ((8R)-hydroperoxy-(5Z,9E,11Z,14Z)-eicosatetraenoate) into the allene oxide (8,9-epoxy-(5Z,9E,11Z,14Z)-eicosatetraenoate). Shows preference for C20 or C22 highly polyunsaturated fatty acids and no activity with C18 fatty acids in vitro. Fatty acid allene oxides are intermediates in the formation of cyclopentenones or hydrolytic products in marine systems, most notably the prostanoid-related clavulones. This Plexaura homomalla (Black sea rod) protein is Allene oxide synthase-lipoxygenase protein.